A 497-amino-acid chain; its full sequence is Cytochrome P450 71A18 (497 aa).

The helical transmembrane segment at 4–24 (TLMVSLCLTTLLTLLLLKKFL) threads the bilayer. Cys439 is a heme binding site.

It belongs to the cytochrome P450 family. Heme serves as cofactor.

It localises to the membrane. In Arabidopsis thaliana (Mouse-ear cress), this protein is Cytochrome P450 71A18 (CYP71A18).